An 874-amino-acid chain; its full sequence is Alanine--tRNA ligase (874 aa).

His562, His566, Cys665, and His669 together coordinate Zn(2+).

The protein belongs to the class-II aminoacyl-tRNA synthetase family. Zn(2+) is required as a cofactor.

It localises to the cytoplasm. The enzyme catalyses tRNA(Ala) + L-alanine + ATP = L-alanyl-tRNA(Ala) + AMP + diphosphate. Its function is as follows. Catalyzes the attachment of alanine to tRNA(Ala) in a two-step reaction: alanine is first activated by ATP to form Ala-AMP and then transferred to the acceptor end of tRNA(Ala). Also edits incorrectly charged Ser-tRNA(Ala) and Gly-tRNA(Ala) via its editing domain. This Pseudomonas fluorescens (strain ATCC BAA-477 / NRRL B-23932 / Pf-5) protein is Alanine--tRNA ligase.